Here is a 471-residue protein sequence, read N- to C-terminus: MAPQLLLCLILTFLWSLPEAESNVFLKSNVANRFLQRTKRANSIFEEIRPGNIERECVEEKCSKEEAREVFQDNEKTEAFWTVYVDGDQCLSNPCHYRGTCKDGIGSYTCTCLPGYEGKNCEHVVVKSCRLFNGNCWHFCKTVQNDTQCSCAEGYRLGVDGFSCIAEGDFSCGRIIKSRNKREASLPDFHFSDDYDAIDENNLVETVQSQSATLLKKSDNPSPDIRIVSGLDCKLGECPWQAVLIDEHGKAFGGGTILSPYFVLTAAHCLNQTKSIAVVVGQVDISRKETRHLLHVDKAYMHSKYVRATYDHDIAILRLRTPIQFSENVVPACLPTADFADEVLMKQDFGIVSGFGRLHERGSTSDILKVIRVPYVDRYTCMLSSNYRITPSMFCAGYGNQPQDACQGDSGGPHITAYGDTHFITGIISWGEGCGRKGKYGIYTKVSNFIPWIKTIMRRNQPSTESSTGRL.

The N-terminal stretch at 1–20 is a signal peptide; the sequence is MAPQLLLCLILTFLWSLPEA. Positions 21-40 are excised as a propeptide; that stretch reads ESNVFLKSNVANRFLQRTKR. The Gla domain maps to 41 to 86; sequence ANSIFEEIRPGNIERECVEEKCSKEEAREVFQDNEKTEAFWTVYVD. 10 positions are modified to 4-carboxyglutamate: Glu46, Glu47, Glu54, Glu56, Glu59, Glu60, Glu65, Glu66, Glu69, and Glu75. Cys57 and Cys62 are joined by a disulfide. Residues 86–122 enclose the EGF-like 1; calcium-binding domain; that stretch reads DGDQCLSNPCHYRGTCKDGIGSYTCTCLPGYEGKNCE. Intrachain disulfides connect Cys90/Cys101, Cys95/Cys110, Cys112/Cys121, Cys129/Cys140, Cys136/Cys149, Cys151/Cys164, Cys172/Cys333, Cys233/Cys238, Cys381/Cys395, and Cys406/Cys434. O-linked (Hex...) serine glycosylation is present at Ser92. Positions 129–164 constitute an EGF-like 2 domain; it reads CRLFNGNCWHFCKTVQNDTQCSCAEGYRLGVDGFSC. Positions 182–226 are cleaved as a propeptide — activation peptide; sequence REASLPDFHFSDDYDAIDENNLVETVQSQSATLLKKSDNPSPDIR. Residues 227 to 458 form the Peptidase S1 domain; that stretch reads IVSGLDCKLG…FIPWIKTIMR (232 aa). His268 functions as the Charge relay system in the catalytic mechanism. N-linked (GlcNAc...) asparagine glycosylation occurs at Asn271. The Charge relay system role is filled by Asp313. Ser410 functions as the Charge relay system in the catalytic mechanism.

It belongs to the peptidase S1 family. Snake venom subfamily. In terms of assembly, heterodimer of a light chain and a heavy chain; disulfide-linked. The vitamin K-dependent, enzymatic carboxylation of some glutamate residues allows the modified protein to bind calcium. Expressed by the venom gland.

The protein localises to the secreted. It catalyses the reaction Selective cleavage of Arg-|-Thr and then Arg-|-Ile bonds in prothrombin to form thrombin.. Snake prothrombin activator that attacks the hemostatic system of prey. This protein is functionally similar to blood coagulation factor Xa. The polypeptide is Venom prothrombin activator vestarin-D2 (Demansia vestigiata (Lesser black whip snake)).